The following is a 1708-amino-acid chain: Rapamycin-insensitive companion of mTOR (1708 aa).

The tract at residues 1–789 (MAAIGRGRSL…DKANLHALIQ (789 aa)) is interaction with NBN. Serine 21, serine 35, and serine 265 each carry phosphoserine. Lysine 274 is covalently cross-linked (Glycyl lysine isopeptide (Lys-Gly) (interchain with G-Cter in ubiquitin)). Residues 521-570 (LKDTEEALLINLRDSQVLQHKENLEWNWNLIGTILKWPNVNLRNYKDEQL) form a ribosome-binding domain region. Residues asparagine 543, arginine 572, and arginine 576 each coordinate ATP. Residues 1022–1041 (LSLNSESTSSRHNSESESVP) are disordered. Residues lysine 1092 and lysine 1095 each carry the N6-acetyllysine modification. Phosphothreonine is present on threonine 1103. The tract at residues 1103 to 1134 (TLPNKKHRSSSDPKGGKLSSESKTSNRRIRTL) is disordered. An N6-acetyllysine mark is found at lysine 1116, lysine 1119, and lysine 1125. Phosphothreonine; by RPS6KB1 is present on threonine 1135. Residues serine 1138, serine 1162, and serine 1219 each carry the phosphoserine modification. The disordered stretch occupies residues 1204-1252 (VVESSTSSHMKIRSQSFNTDTTTSGISSMSSSPSRETVGVDATTMDTDC). Residues 1206–1221 (ESSTSSHMKIRSQSFN) are compositionally biased toward polar residues. Residues 1222–1240 (TDTTTSGISSMSSSPSRET) show a composition bias toward low complexity. At serine 1235 the chain carries Phosphoserine; by GSK3-beta. A Phosphothreonine modification is found at threonine 1271. Phosphoserine is present on residues serine 1274, serine 1278, serine 1282, and serine 1284. The segment covering 1275–1288 (NHLSLSKSNSVSLV) has biased composition (low complexity). The interval 1275–1298 (NHLSLSKSNSVSLVPPGSSHTLPR) is disordered. Phosphothreonine is present on threonine 1295. 2 positions are modified to phosphoserine: serine 1302 and serine 1313. Threonine 1332 is modified (phosphothreonine). Phosphoserine is present on residues serine 1346 and serine 1353. Position 1376 is a phosphothreonine (threonine 1376). The residue at position 1385 (serine 1385) is a Phosphoserine. Tyrosine 1386 carries the phosphotyrosine modification. A phosphoserine mark is found at serine 1388, serine 1396, and serine 1411. Residues histidine 1515, cysteine 1520, and cysteine 1523 each contribute to the Zn(2+) site. Serine 1571, serine 1574, serine 1577, and serine 1591 each carry phosphoserine. Cysteine 1651 serves as a coordination point for Zn(2+). A Phosphothreonine; by GSK3-alpha and GSK3-beta modification is found at threonine 1695.

The protein belongs to the RICTOR family. As to quaternary structure, component of the mechanistic target of rapamycin complex 2 (mTORC2), consisting in two heterotretramers composed of MTOR, MLST8, RICTOR and MAPKAP1/SIN1. The mTORC2 core complex associates with PRR5/PROTOR1 and/or PRR5L/PROTOR2. Contrary to mTORC1, mTORC2 does not bind to and is not sensitive to FKBP12-rapamycin. Binds directly to MTOR and PRR5 within the TORC2 complex; interaction with MTOR is enhanced by deubiquitination of RICTOR by USP9X. Interaction with MAPKAP1 is not enhanced by RICTOR deubiquitination by USP9X. Interacts with CCDC28B. Interacts with NBN. Interacts with SIK3. Interacts with NCKAP1L. Interacts with kinases GSK3A and GSK3B; the interactions lead to phosphorylation of RICTOR at Thr-1695 which facilitates its FBXW7-mediated ubiquitination and subsequent degradation. Interacts with FBXW7; the interaction is enhanced by GSK3-mediated phosphorylation of Thr-1695 and results in RICTOR ubiquitination and degradation. Interacts with ARMH4 (via cytoplasmic tail); this interaction bridges ARMH4 to the mTORC2 complex and inhibits the mTORC2 kinase activity. Interacts with UBXN2A. Interacts with TSPAN8. (Microbial infection) Interacts with vaccinia virus protein F17; this interaction dysregulates MTOR. Phosphorylated by MTOR; when part of mTORC2. Phosphorylated at Thr-1135 by RPS6KB1 downstream of the mTORC1 complex: phosphorylation of RICTOR inhibits mTORC2 signaling by creating a binding site for 14-3-3 proteins. Phosphorylated at Thr-1695 by GSK3A and GSK3B which facilitates RICTOR ubiquitination and subsequent degradation. Phosphorylated at Ser-1235 by GSK3B in response to endoplasmic stress, inhibiting mTORC2 signaling. In terms of processing, ubiquitinated by the SCF(FBXW7) complex, leading to its degradation by the proteasome. Deubiquitinated by USP9X; deubiquitination stabilizes RICTOR and enhances its binding to MTOR, thus promoting mTORC2 complex assembly. Post-translationally, acetylated by EP300/p300 in response to glucose, leading to activate the mTORC2 complex. Acetylation by BLOC1S1/GCN5L1 in response to hypotoxic stress protects RICTOR against ubiquitination and subsequent degradation by the proteasome.

It localises to the cell membrane. Its subcellular location is the endoplasmic reticulum membrane. The protein localises to the lysosome membrane. Its function is as follows. Component of the mechanistic target of rapamycin complex 2 (mTORC2), which transduces signals from growth factors to pathways involved in proliferation, cytoskeletal organization, lipogenesis and anabolic output. In response to growth factors, mTORC2 phosphorylates and activates AGC protein kinase family members, including AKT (AKT1, AKT2 and AKT3), PKC (PRKCA, PRKCB and PRKCE) and SGK1. In contrast to mTORC1, mTORC2 is nutrient-insensitive. Within the mTORC2 complex, RICTOR probably acts as a molecular adapter. RICTOR is responsible for the FKBP12-rapamycin-insensitivity of mTORC2. mTORC2 plays a critical role in AKT1 activation by mediating phosphorylation of different sites depending on the context, such as 'Thr-450', 'Ser-473', 'Ser-477' or 'Thr-479', facilitating the phosphorylation of the activation loop of AKT1 on 'Thr-308' by PDPK1/PDK1 which is a prerequisite for full activation. mTORC2 catalyzes the phosphorylation of SGK1 at 'Ser-422' and of PRKCA on 'Ser-657'. The mTORC2 complex also phosphorylates various proteins involved in insulin signaling, such as FBXW8 and IGF2BP1. mTORC2 acts upstream of Rho GTPases to regulate the actin cytoskeleton, probably by activating one or more Rho-type guanine nucleotide exchange factors. mTORC2 promotes the serum-induced formation of stress-fibers or F-actin. The sequence is that of Rapamycin-insensitive companion of mTOR from Homo sapiens (Human).